A 2144-amino-acid polypeptide reads, in one-letter code: Insulin-like receptor (2144 aa).

Residues 1-43 (MFNMPRGVTKSKSKRGKIKMENDMAAAATTTACTLGHICVLCR) form the signal peptide. Asn74 carries an N-linked (GlcNAc...) asparagine glycan. A compositionally biased stretch (basic residues) spans 174-199 (RRQHQQQHHHHYQHHHQQHHQQHHQR). A disordered region spans residues 174-200 (RRQHQQQHHHHYQHHHQQHHQQHHQRQ). Residue Asn203 is glycosylated (N-linked (GlcNAc...) asparagine). The interval 229–256 (NYKQQQQLQHNQQLPRATPQQKQQEKDR) is disordered. Positions 232–242 (QQQQLQHNQQL) are enriched in low complexity. N-linked (GlcNAc...) asparagine glycans are attached at residues Asn265, Asn356, Asn376, Asn406, Asn468, and Asn509. 8 disulfide bridges follow: Cys531/Cys539, Cys535/Cys545, Cys546/Cys554, Cys550/Cys564, Cys567/Cys576, Cys580/Cys591, Cys597/Cys618, and Cys635/Cys638. Residues 542–586 (EHTCCSQDCLGGCVIDKNGNESCISCRNVSFNNICMDSCPKGYYQ) form an FU repeat. N-linked (GlcNAc...) asparagine glycans are attached at residues Asn561 and Asn569. N-linked (GlcNAc...) asparagine glycosylation is found at Asn751, Asn810, Asn824, Asn839, Asn864, Asn898, Asn946, Asn1053, Asn1147, Asn1218, and Asn1265. 2 Fibronectin type-III domains span residues 825–927 (VTTK…TNPG) and 928–1026 (RPSK…EYDD). The disordered stretch occupies residues 1053-1084 (NGSSDKSDGAEGAALDSNAIPNGGATNPSRRR). In terms of domain architecture, Fibronectin type-III 3 spans 1210 to 1305 (LKVDLEHANN…EVEHIKVEPP (96 aa)). A helical transmembrane segment spans residues 1311–1331 (VFFWLLGIGLAFLIVSLFGYV). The Cytoplasmic portion of the chain corresponds to 1332 to 2144 (CYLHKRKVPS…PPNGFIGREA (813 aa)). Residues 1351 to 1354 (NPFY) are chico-binding. The residue at position 1354 (Tyr1354) is a Phosphotyrosine; by autocatalysis. The 289-residue stretch at 1371–1659 (IIQLAPLGQG…LEPQCPNSQF (289 aa)) folds into the Protein kinase domain. Residues 1377 to 1385 (LGQGSFGMV) and Lys1405 contribute to the ATP site. Asp1519 acts as the Proton acceptor in catalysis. Phosphotyrosine; by autocatalysis occurs at positions 1545, 1549, and 1550. Disordered stretches follow at residues 1690 to 1724 (VPLD…DQPP), 1788 to 1871 (RGYE…KKTV), 1886 to 1962 (LFNH…ISDN), and 2020 to 2144 (ISHN…GREA). Position 1816 is a phosphoserine (Ser1816). Composition is skewed to low complexity over residues 1849–1860 (STASAGSSNASS) and 1894–1916 (SNAS…NLTS). Positions 2042-2062 (SDEDNEQEEDDEDEDDDVDDE) are enriched in acidic residues. The span at 2063 to 2073 (HVEHIKMERMP) shows a compositional bias: basic and acidic residues. Over residues 2084-2120 (SKTQPPRSRSVSQTRKSPTNPNSGIGATGAGNRSNLL) the composition is skewed to polar residues.

It belongs to the protein kinase superfamily. Tyr protein kinase family. Insulin receptor subfamily. As to quaternary structure, tetramer of 2 alpha and 2 beta chains linked by disulfide bonds. The alpha chains contribute to the formation of the ligand-binding domain, while the beta chains carry the kinase domain. Interacts (via C-terminal cytoplasmic region) with dock/dreadlocks (via SH2 and SH3 domains); when autophosphorylated. May interact (via beta subunit) with chico/IRS-1; this interaction may lead to tyrosine phosphorylation of the insulin receptor substrate chico. Interacts with Elp6; the interaction may stabilize Elp6. It depends on Mn(2+) as a cofactor. Post-translationally, the 280 kDa proreceptor is proteolytically processed to form a 120 kDa alpha subunit and a 170 kDa beta subunit. The beta subunit undergoes cell-specific cleavage to generate a 90 kDa beta subunit and a free 60 kDa C-terminal subunit. Both the 90 kDa and the 170 kDa beta subunits can assemble with the alpha subunits to form mature receptors. In terms of processing, autophosphorylated on tyrosine residues, including Tyr-1549 and Tyr-1550, in response to exogenous insulin. Tyr-1549 and Tyr-1550 are dephosphorylated by Ptp61F recruited by the dock/dreadlocks adapter protein. Phosphorylation of Tyr-1354 is required for Chico-binding.

The protein resides in the membrane. Its subcellular location is the cell projection. It is found in the axon. It localises to the growth cone membrane. It carries out the reaction L-tyrosyl-[protein] + ATP = O-phospho-L-tyrosyl-[protein] + ADP + H(+). With respect to regulation, activated in response to insulin. Autophosphorylation activates the kinase activity. Functionally, has a ligand-stimulated tyrosine-protein kinase activity. Binds 3 insulin-like peptide ligands. Regulates cell number and cell size during development by regulating cell growth and survival, affecting body size and organ size, including ovaries and imaginal disks. Plays a role in life-span determination. May be involved in regulation of other neuroendocrine signaling pathways. Involved in the development of the embryonic nervous system. Functions upstream of dock/dreadlocks for photoreceptor (R cell) axon guidance and targeting in the visual system. Involved in the acs mediated recovery of gut enterocytes following the cytoplasmic purge response to intestinal bacterial infection. This chain is Insulin-like receptor, found in Drosophila melanogaster (Fruit fly).